Here is a 114-residue protein sequence, read N- to C-terminus: Ribonuclease P protein component (114 aa).

It belongs to the RnpA family. Consists of a catalytic RNA component (M1 or rnpB) and a protein subunit.

The enzyme catalyses Endonucleolytic cleavage of RNA, removing 5'-extranucleotides from tRNA precursor.. RNaseP catalyzes the removal of the 5'-leader sequence from pre-tRNA to produce the mature 5'-terminus. It can also cleave other RNA substrates such as 4.5S RNA. The protein component plays an auxiliary but essential role in vivo by binding to the 5'-leader sequence and broadening the substrate specificity of the ribozyme. The chain is Ribonuclease P protein component from Lactiplantibacillus plantarum (strain ATCC BAA-793 / NCIMB 8826 / WCFS1) (Lactobacillus plantarum).